The sequence spans 423 residues: Phytoene synthase, chloroplastic (423 aa).

The transit peptide at 1–136 (MVVAILRVVS…DAYDRCGEVC (136 aa)) directs the protein to the chloroplast.

It belongs to the phytoene/squalene synthase family. In terms of assembly, monomer.

The protein localises to the plastid. It localises to the chloroplast. It catalyses the reaction 2 (2E,6E,10E)-geranylgeranyl diphosphate = 15-cis-phytoene + 2 diphosphate. The protein operates within carotenoid biosynthesis; phytoene biosynthesis; all-trans-phytoene from geranylgeranyl diphosphate: step 1/1. Catalyzes the reaction from prephytoene diphosphate to phytoene. This Narcissus pseudonarcissus (Daffodil) protein is Phytoene synthase, chloroplastic (PSY).